Consider the following 262-residue polypeptide: Type II pantothenate kinase (262 aa).

7 to 14 is an ATP binding site; sequence DAGGSLVK. Residue Glu-71 is the Proton acceptor of the active site. Residues Thr-101, 119–123, and Tyr-135 contribute to the ATP site; that span reads GGLLT.

This sequence belongs to the type II pantothenate kinase family. As to quaternary structure, homodimer.

Its subcellular location is the cytoplasm. The enzyme catalyses (R)-pantothenate + ATP = (R)-4'-phosphopantothenate + ADP + H(+). The protein operates within cofactor biosynthesis; coenzyme A biosynthesis; CoA from (R)-pantothenate: step 1/5. Functionally, catalyzes the phosphorylation of pantothenate (Pan), the first step in CoA biosynthesis. The sequence is that of Type II pantothenate kinase from Oceanobacillus iheyensis (strain DSM 14371 / CIP 107618 / JCM 11309 / KCTC 3954 / HTE831).